We begin with the raw amino-acid sequence, 366 residues long: Isocitrate dehydrogenase [NAD] subunit alpha, mitochondrial (366 aa).

A mitochondrion-targeting transit peptide spans Met1–Phe27. N6-succinyllysine is present on Lys77. A Phosphothreonine modification is found at Thr101. Positions 115, 125, and 146 each coordinate substrate. N6-acetyllysine is present on Lys223. Mg(2+) contacts are provided by Asp233, Asp257, and Asp261. Lys343 is modified (N6-acetyllysine; alternate). Lys343 carries the post-translational modification N6-succinyllysine; alternate. Lys350 carries the post-translational modification N6-succinyllysine.

The protein belongs to the isocitrate and isopropylmalate dehydrogenases family. Heterooligomer of subunits alpha (IDH3A), beta (IDH3B), and gamma (IDH3G) in the apparent ratio of 2:1:1. The heterodimer containing one IDH3A and one IDH3B subunit and the heterodimer containing one IDH3A and one IDH3G subunit assemble into a heterotetramer (which contains two subunits of IDH3A, one of IDH3B and one of IDH3G) and further into the heterooctamer. The cofactor is Mg(2+). Mn(2+) is required as a cofactor. Expressed in brown adipose tissue (BAT).

It localises to the mitochondrion. The catalysed reaction is D-threo-isocitrate + NAD(+) = 2-oxoglutarate + CO2 + NADH. Its activity is regulated as follows. The heterotetramer and the heterodimer composed of IDH3A and IDH3G subunits can be allosterically activated by citrate (CIT) or/and ADP, and the two activators can act independently or synergistically. The heterodimer composed of IDH3A and IDH3B subunits cannot be allosterically regulated and the allosteric regulation of the heterotetramer is through the IDH3G subunit and not the IDH3B subunit. The IDH3G subunit contains the allosteric site which consists of a CIT-binding site and an ADP-binding site, and the binding of CIT and ADP causes conformational changes at the allosteric site which are transmitted to the active site in the catalytic subunit (IDH3A) through a cascade of conformational changes at the heterodimer interface, leading to stabilization of the isocitrate-binding at the active site and thus activation of the enzyme. ATP can activate the heterotetramer and the heterodimer composed of IDH3A and IDH3G subunits at low concentrations but inhibits their activities at high concentrations, whereas ATP exhibits only inhibitory effect on the heterodimer composed of IDH3A and IDH3B subunits. Its function is as follows. Catalytic subunit of the enzyme which catalyzes the decarboxylation of isocitrate (ICT) into alpha-ketoglutarate. The heterodimer composed of the alpha (IDH3A) and beta (IDH3B) subunits and the heterodimer composed of the alpha (IDH3A) and gamma (IDH3G) subunits, have considerable basal activity but the full activity of the heterotetramer (containing two subunits of IDH3A, one of IDH3B and one of IDH3G) requires the assembly and cooperative function of both heterodimers. This Rattus norvegicus (Rat) protein is Isocitrate dehydrogenase [NAD] subunit alpha, mitochondrial.